Reading from the N-terminus, the 261-residue chain is GTP cyclohydrolase FolE2 (261 aa).

This sequence belongs to the GTP cyclohydrolase IV family.

It catalyses the reaction GTP + H2O = 7,8-dihydroneopterin 3'-triphosphate + formate + H(+). Its pathway is cofactor biosynthesis; 7,8-dihydroneopterin triphosphate biosynthesis; 7,8-dihydroneopterin triphosphate from GTP: step 1/1. Converts GTP to 7,8-dihydroneopterin triphosphate. This is GTP cyclohydrolase FolE2 from Herminiimonas arsenicoxydans.